The primary structure comprises 391 residues: Na(+)/H(+) antiporter NhaA (391 aa).

12 consecutive transmembrane segments (helical) span residues 9–29 (FQLEAASGLLLIAAAVLALII), 36–56 (YLYSGLLDVPVAVQIGALNIA), 59–79 (LLLWINDGLMALFFLLIGLEV), 95–115 (ILPATAAVGGMVVPALIYWFI), 123–143 (VAGWAIPTATDIAFALGVLAL), 154–174 (LFLMTLAIIDDLGAIIVIALF), 177–197 (GTLSSVSLLLAAACLVVLIAM), 213–235 (LILWVCVLKSGVHATLAGVALAL), 259–279 (WVAYAILPLFAFANAGVSLAG), 293–313 (IAVGLLLGKTVGVFGLTWLAV), 329–349 (ILGVAILCGIGFTMSLFVGSL), and 364–384 (MGILTGSFFAAVIGYAVTAMA).

Belongs to the NhaA Na(+)/H(+) (TC 2.A.33) antiporter family.

The protein localises to the cell inner membrane. The catalysed reaction is Na(+)(in) + 2 H(+)(out) = Na(+)(out) + 2 H(+)(in). Functionally, na(+)/H(+) antiporter that extrudes sodium in exchange for external protons. The polypeptide is Na(+)/H(+) antiporter NhaA (Pseudomonas putida (strain GB-1)).